Here is a 210-residue protein sequence, read N- to C-terminus: Tetraspanin-31 (210 aa).

At 1 to 12 the chain is on the cytoplasmic side; the sequence is MVCGGFACSKNA. A helical membrane pass occupies residues 13–33; the sequence is LCALNVVYMLVGLLLIGVAAW. The Extracellular segment spans residues 34 to 44; it reads AKGLGLVSSIH. The chain crosses the membrane as a helical span at residues 45-65; the sequence is IIGGVIAVGVFLLLIAVAGLV. The Cytoplasmic portion of the chain corresponds to 66–72; it reads GAVNHHQ. Residues 73-93 form a helical membrane-spanning segment; sequence VLLFFYMIILGLVFIFQFGIS. Topologically, residues 94-173 are extracellular; sequence CSCLAINLSK…FLKHSDEALK (80 aa). 4 N-linked (GlcNAc...) asparagine glycosylation sites follow: N100, N109, N117, and N134. Residues 174–194 traverse the membrane as a helical segment; it reads ILGGVGLFFSFTEILGVWLAM. Over 195–210 the chain is Cytoplasmic; it reads RFRNQKDPRANPSAFL.

It belongs to the tetraspanin (TM4SF) family.

The protein localises to the membrane. This Bos taurus (Bovine) protein is Tetraspanin-31 (TSPAN31).